The primary structure comprises 324 residues: tRNA U34 carboxymethyltransferase (324 aa).

Carboxy-S-adenosyl-L-methionine-binding positions include lysine 92, tryptophan 106, lysine 111, glycine 131, 153–155 (DPS), methionine 197, tyrosine 201, and arginine 316.

The protein belongs to the class I-like SAM-binding methyltransferase superfamily. CmoB family. Homotetramer.

The catalysed reaction is carboxy-S-adenosyl-L-methionine + 5-hydroxyuridine(34) in tRNA = 5-carboxymethoxyuridine(34) in tRNA + S-adenosyl-L-homocysteine + H(+). Catalyzes carboxymethyl transfer from carboxy-S-adenosyl-L-methionine (Cx-SAM) to 5-hydroxyuridine (ho5U) to form 5-carboxymethoxyuridine (cmo5U) at position 34 in tRNAs. This is tRNA U34 carboxymethyltransferase from Hahella chejuensis (strain KCTC 2396).